The primary structure comprises 255 residues: tRNA1(Val) (adenine(37)-N6)-methyltransferase (255 aa).

This sequence belongs to the methyltransferase superfamily. tRNA (adenine-N(6)-)-methyltransferase family.

Its subcellular location is the cytoplasm. The catalysed reaction is adenosine(37) in tRNA1(Val) + S-adenosyl-L-methionine = N(6)-methyladenosine(37) in tRNA1(Val) + S-adenosyl-L-homocysteine + H(+). Specifically methylates the adenine in position 37 of tRNA(1)(Val) (anticodon cmo5UAC). This Porphyromonas gingivalis (strain ATCC 33277 / DSM 20709 / CIP 103683 / JCM 12257 / NCTC 11834 / 2561) protein is tRNA1(Val) (adenine(37)-N6)-methyltransferase.